A 137-amino-acid chain; its full sequence is Gonadotropin subunit beta-2 (137 aa).

A signal peptide spans 1–24; it reads MLPFMLSSFLGASPSIWPLAPAEA. Disulfide bonds link Cys30–Cys76, Cys44–Cys91, Cys47–Cys129, Cys55–Cys107, Cys59–Cys109, and Cys112–Cys119. N-linked (GlcNAc...) asparagine glycosylation occurs at Asn34.

This sequence belongs to the glycoprotein hormones subunit beta family. As to quaternary structure, heterodimer of an alpha and a beta chain.

It is found in the secreted. Functionally, involved in gametogenesis and steroidogenesis. The chain is Gonadotropin subunit beta-2 (cgbb) from Acanthopagrus latus (Yellowfin seabream).